We begin with the raw amino-acid sequence, 72 residues long: UPF0154 protein YneF (72 aa).

The chain crosses the membrane as a helical span at residues 4–24; it reads WVGILVGVVALLIGVALGFFI.

It belongs to the UPF0154 family.

The protein localises to the membrane. The protein is UPF0154 protein YneF (yneF) of Bacillus subtilis (strain 168).